We begin with the raw amino-acid sequence, 948 residues long: FRIGIDA-like protein 5 (948 aa).

The stretch at 47–164 (DSTRSVLEER…VEKHRERIVA (118 aa)) forms a coiled coil. 3 disordered regions span residues 447-500 (ESAQ…APSQ), 518-538 (VKESGADHQPDTIATHPSGTE), and 804-894 (RNTS…YPSH). Basic and acidic residues-rich tracts occupy residues 459 to 475 (SYEKRQSTTKGVEKSEA) and 518 to 527 (VKESGADHQP). A compositionally biased stretch (low complexity) spans 807–817 (SNGSGSGSASS). Positions 818–830 (KPDSTIKQSQTAK) are enriched in polar residues. Residues 861-872 (FSKKNKRGKKRS) are compositionally biased toward basic residues. Polar residues predominate over residues 873 to 894 (MSGNNQSSGHIASHTSNHYPSH).

It belongs to the Frigida family. Expressed at low levels during seed development.

This Arabidopsis thaliana (Mouse-ear cress) protein is FRIGIDA-like protein 5 (FRL5).